The following is a 693-amino-acid chain: Glycine--tRNA ligase beta subunit (693 aa).

Belongs to the class-II aminoacyl-tRNA synthetase family. Tetramer of two alpha and two beta subunits.

The protein resides in the cytoplasm. It catalyses the reaction tRNA(Gly) + glycine + ATP = glycyl-tRNA(Gly) + AMP + diphosphate. In Vibrio campbellii (strain ATCC BAA-1116), this protein is Glycine--tRNA ligase beta subunit.